The sequence spans 184 residues: uncharacterized protein (184 aa).

This is an uncharacterized protein from Archaeoglobus fulgidus (strain ATCC 49558 / DSM 4304 / JCM 9628 / NBRC 100126 / VC-16).